We begin with the raw amino-acid sequence, 288 residues long: MGLFDRKEKYIRINPNRYVRNGVDHPVPEVPDDLFAKCPGCKQAIYQKDLGQAKICPNCSYTFRISAKERLDLTVDEGSFQELFTGIKTENPLNFPGYMEKLAATKEKTGLDEAVVTGVATIKGQKTALAIMDSNFIMASMGTVVGEKITKLFEYAILEKLPVVIFTASGGARMQEGIMSLMQMAKISAAVKCHSNAGLLYLTVLTDPTTGGVTASFAMQGDIILAEPQTLIGFAGRRVIENTVRETLPDDFQKAEFLQEHGFVDAIVKRTELADTIATLLSFHGGVQ.

Residues 34–288 form the CoA carboxyltransferase N-terminal domain; sequence LFAKCPGCKQ…TLLSFHGGVQ (255 aa). Zn(2+) is bound by residues cysteine 38, cysteine 41, cysteine 56, and cysteine 59. Residues 38–59 form a C4-type zinc finger; sequence CPGCKQAIYQKDLGQAKICPNC.

The protein belongs to the AccD/PCCB family. In terms of assembly, acetyl-CoA carboxylase is a heterohexamer composed of biotin carboxyl carrier protein (AccB), biotin carboxylase (AccC) and two subunits each of ACCase subunit alpha (AccA) and ACCase subunit beta (AccD). It depends on Zn(2+) as a cofactor.

The protein resides in the cytoplasm. It catalyses the reaction N(6)-carboxybiotinyl-L-lysyl-[protein] + acetyl-CoA = N(6)-biotinyl-L-lysyl-[protein] + malonyl-CoA. It functions in the pathway lipid metabolism; malonyl-CoA biosynthesis; malonyl-CoA from acetyl-CoA: step 1/1. Functionally, component of the acetyl coenzyme A carboxylase (ACC) complex. Biotin carboxylase (BC) catalyzes the carboxylation of biotin on its carrier protein (BCCP) and then the CO(2) group is transferred by the transcarboxylase to acetyl-CoA to form malonyl-CoA. This chain is Acetyl-coenzyme A carboxylase carboxyl transferase subunit beta, found in Streptococcus thermophilus (strain ATCC BAA-491 / LMD-9).